Reading from the N-terminus, the 536-residue chain is Probable serine/threonine-protein kinase DDB_G0268550 (536 aa).

The 292-residue stretch at 14 to 305 (EIIEKNYRKG…IDVLEIHPFL (292 aa)) folds into the Protein kinase domain. ATP-binding positions include 20–28 (YRKGGFSKI) and Lys-51. The active-site Proton acceptor is the Asp-147. Residues 161–192 (DNNNNNNNNNNNNNNNNNNNSNINDDNNNSNS) are disordered.

Belongs to the protein kinase superfamily. Ser/Thr protein kinase family. Mg(2+) is required as a cofactor.

It carries out the reaction L-seryl-[protein] + ATP = O-phospho-L-seryl-[protein] + ADP + H(+). The catalysed reaction is L-threonyl-[protein] + ATP = O-phospho-L-threonyl-[protein] + ADP + H(+). This chain is Probable serine/threonine-protein kinase DDB_G0268550, found in Dictyostelium discoideum (Social amoeba).